Reading from the N-terminus, the 411-residue chain is 2-acylphloroglucinol 4-prenyltransferase, chloroplastic (411 aa).

Residues 1-91 (MELSSVSSFS…CNDQRGNSIR (91 aa)) constitute a chloroplast transit peptide. The next 8 membrane-spanning stretches (helical) occupy residues 159–179 (LLGM…NQIF), 198–218 (ISVE…FILI), 226–246 (LLTS…VPPF), 253–273 (ITAF…VYYA), 278–298 (LGLA…ITFM), 333–353 (LLGT…AIIW), 356–376 (AFKS…LIFQ), and 391–411 (KSFY…YLFI).

It belongs to the UbiA prenyltransferase family. The cofactor is Mg(2+). In terms of tissue distribution, expressed in glandular trichomes called lupulin glands, and in early stage and mature cones. Detected in leaves, but not in root, stem and first stage of flowers. No expression in male flowers.

It is found in the plastid. The protein resides in the chloroplast membrane. It carries out the reaction a 2-acylphloroglucinol + dimethylallyl diphosphate = a 2-acyl-4-prenylphloroglucinol + diphosphate. It functions in the pathway secondary metabolite biosynthesis. Its function is as follows. Involved in the biosynthesis of prenylated phenolics natural products which contribute to the bitter taste of beer and display broad biological activities. Catalyzes the first prenylation step in the beta-bitter acid pathway. Abble to transfer dimethylallyl diphosphate (DMAPP) or geranyl diphosphate (GPP) to phlorisovalerophenone (PIVP), phlorisobutrylphenone (PIMP) and naringenin chalcone. Can also use phlorisobutyrophenone (PIBP) and phlormethylbutanophenone (PMBP) as substrates, but not 6'-O-methylated chalcone or naringenin. The protein is 2-acylphloroglucinol 4-prenyltransferase, chloroplastic of Humulus lupulus (European hop).